A 282-amino-acid polypeptide reads, in one-letter code: MKYIGAHVSAAGGLDQAPARAHALEATAFALFTKNQRQWKAAPLTDDAIDAFRAACTRYGYQSQQILPHDSYLINLGHPVTEALEKSRGAFIDEMQRCADLGLTLLNFHPGSHLLQIDERDCLSRIAESINLALSQTQGVCAVIENTAGQGSNLGFRFEQLAAIIEQVEDKSRVGVCIDTCHAFAAGYDLRDEAACGETFAQFSRTVGFSYLRGMHLNDAKSAFNSRVDRHQSLGEGNIGDAAFRWIMRDPRFDGIPLILETTDPGRWQDEIAWLKAQQTAE.

Zn(2+) contacts are provided by histidine 69, histidine 109, glutamate 145, aspartate 179, histidine 182, histidine 216, aspartate 229, histidine 231, and glutamate 261.

This sequence belongs to the AP endonuclease 2 family. Zn(2+) serves as cofactor.

The catalysed reaction is Endonucleolytic cleavage to 5'-phosphooligonucleotide end-products.. Functionally, endonuclease IV plays a role in DNA repair. It cleaves phosphodiester bonds at apurinic or apyrimidinic (AP) sites, generating a 3'-hydroxyl group and a 5'-terminal sugar phosphate. The polypeptide is Probable endonuclease 4 (Edwardsiella ictaluri (strain 93-146)).